A 252-amino-acid chain; its full sequence is Trans-aconitate 2-methyltransferase (252 aa).

The protein belongs to the methyltransferase superfamily. Tam family.

It localises to the cytoplasm. It catalyses the reaction trans-aconitate + S-adenosyl-L-methionine = (E)-3-(methoxycarbonyl)pent-2-enedioate + S-adenosyl-L-homocysteine. Functionally, catalyzes the S-adenosylmethionine monomethyl esterification of trans-aconitate. The sequence is that of Trans-aconitate 2-methyltransferase from Shigella flexneri serotype 5b (strain 8401).